The following is a 428-amino-acid chain: Phosphomethylpyrimidine synthase 1 (428 aa).

Residues Met94, Tyr123, His162, 184–186, 225–228, and Glu264 contribute to the substrate site; these read SRG and NGMR. His268 lines the Zn(2+) pocket. Tyr291 serves as a coordination point for substrate. His332 provides a ligand contact to Zn(2+). Residues Cys408, Cys411, and Cys415 each coordinate [4Fe-4S] cluster.

The protein belongs to the ThiC family. The cofactor is [4Fe-4S] cluster.

The catalysed reaction is 5-amino-1-(5-phospho-beta-D-ribosyl)imidazole + S-adenosyl-L-methionine = 4-amino-2-methyl-5-(phosphooxymethyl)pyrimidine + CO + 5'-deoxyadenosine + formate + L-methionine + 3 H(+). It participates in cofactor biosynthesis; thiamine diphosphate biosynthesis. In terms of biological role, catalyzes the synthesis of the hydroxymethylpyrimidine phosphate (HMP-P) moiety of thiamine from aminoimidazole ribotide (AIR) in a radical S-adenosyl-L-methionine (SAM)-dependent reaction. This chain is Phosphomethylpyrimidine synthase 1, found in Methanosarcina barkeri (strain Fusaro / DSM 804).